The primary structure comprises 160 residues: Sulfur-rich protein (160 aa).

A run of 2 helical transmembrane segments spans residues Ile-63–Leu-83 and Phe-92–Met-112.

Its subcellular location is the membrane. The polypeptide is Sulfur-rich protein (srp) (Chlamydophila psittaci (strain ATCC VR-125 / 6BC) (Chlamydia psittaci)).